Consider the following 214-residue polypeptide: Probable maleylacetoacetate isomerase (214 aa).

In terms of domain architecture, GST N-terminal spans 4–84 (QKPVLYSYWR…YLEETHPDVP (81 aa)). Glutathione-binding positions include 14–19 (SSCSWR), valine 56, 68–69 (ES), glutamine 108, and 112–114 (NLK). In terms of domain architecture, GST C-terminal spans 89 to 212 (DPIKRAHARA…HPDNQPDTGL (124 aa)).

This sequence belongs to the GST superfamily. Zeta family. Glutathione serves as cofactor.

The protein resides in the cytoplasm. The enzyme catalyses 4-maleylacetoacetate = 4-fumarylacetoacetate. It participates in amino-acid degradation; L-phenylalanine degradation; acetoacetate and fumarate from L-phenylalanine: step 5/6. The chain is Probable maleylacetoacetate isomerase (gst-42) from Caenorhabditis elegans.